Reading from the N-terminus, the 353-residue chain is D-alanine--D-alanine ligase (353 aa).

The ATP-grasp domain maps to 141 to 349; that stretch reads KAAFAAAGLP…LEELVSQLVI (209 aa). An ATP-binding site is contributed by 176 to 231; the sequence is EAKLKYPCFVKPANLGSSVGISKAQNRNELLIGLDKAASLDRRIVVEQGVSARELE. The Mg(2+) site is built by aspartate 302, glutamate 316, and asparagine 318.

It belongs to the D-alanine--D-alanine ligase family. Requires Mg(2+) as cofactor. Mn(2+) serves as cofactor.

The protein resides in the cytoplasm. It catalyses the reaction 2 D-alanine + ATP = D-alanyl-D-alanine + ADP + phosphate + H(+). Its pathway is cell wall biogenesis; peptidoglycan biosynthesis. Functionally, cell wall formation. In Prochlorococcus marinus (strain MIT 9313), this protein is D-alanine--D-alanine ligase.